The sequence spans 214 residues: UPF0502 protein Acid345_3645 (214 aa).

Belongs to the UPF0502 family.

The polypeptide is UPF0502 protein Acid345_3645 (Koribacter versatilis (strain Ellin345)).